The chain runs to 83 residues: uncharacterized protein (83 aa).

Residues 50 to 70 (IMVFLGEAWIILIPFAIFCII) traverse the membrane as a helical segment.

This sequence belongs to the plectrovirus ORF7 family.

It localises to the host membrane. This is an uncharacterized protein from Spiroplasma citri (SpV1).